Reading from the N-terminus, the 510-residue chain is NAD(P)H-quinone oxidoreductase subunit 2 B, chloroplastic (510 aa).

A run of 12 helical transmembrane segments spans residues 24–44 (LLLFNGSFIFPECILIFGLIL), 59–79 (WFYFISSTSLVISITALLFRW), 99–119 (IFQFLILLCSTLCIPLSVEYI), 124–144 (MAITEFLLFILTATLGGMFLC), 149–169 (LITIFVAPECFSLCSYLLSGY), 183–203 (YLLMGGASSSILVHGFSWLYG), 229–249 (ISIALISITVGLGFKLSPAPF), 295–315 (WHLLLEILAILSMILGNLLAI), 323–343 (MLAYSSIGQIGYVIIGIIVGD), 354–374 (YMLFYISMNLGTFACIVLFGL), 395–415 (ALSLALCLLSLGGLPPLAGFF), and 418–438 (LYLFWCGWQAGLYFLVSIGLL).

The protein belongs to the complex I subunit 2 family. NDH is composed of at least 16 different subunits, 5 of which are encoded in the nucleus.

Its subcellular location is the plastid. The protein localises to the chloroplast thylakoid membrane. The enzyme catalyses a plastoquinone + NADH + (n+1) H(+)(in) = a plastoquinol + NAD(+) + n H(+)(out). It catalyses the reaction a plastoquinone + NADPH + (n+1) H(+)(in) = a plastoquinol + NADP(+) + n H(+)(out). Its function is as follows. NDH shuttles electrons from NAD(P)H:plastoquinone, via FMN and iron-sulfur (Fe-S) centers, to quinones in the photosynthetic chain and possibly in a chloroplast respiratory chain. The immediate electron acceptor for the enzyme in this species is believed to be plastoquinone. Couples the redox reaction to proton translocation, and thus conserves the redox energy in a proton gradient. This is NAD(P)H-quinone oxidoreductase subunit 2 B, chloroplastic from Lolium perenne (Perennial ryegrass).